The sequence spans 357 residues: MGSRELSLRERQVLGIIIQSYVVTAAPVGSRYIARNYSLGLSDATIRNVMADLEDEGYIHQPHTSAGRIPTDLGYRYYVDLIMKVQRIDEDEKRRMETDYGQIAMEHPGTSRDVLLSAAKVLGCISRQLSVVLSPTLSDAVFERLDMVLLSSTRMMVILSIHSLFVKTIVMELPLEVSRKMIEEVSNVINERLAGLTLSEIRRSIAHRLAGSHGDGALKDLIVRSAGSLFDESPIFERLYISGTEYIVDQPEFKQPERVRELITMIEDKFSVARLVEKSGHMSEALRPSDMDVTISIGSENSTREAEDLTIVSTPYYAGNMVGRLGILGPKRMDYEHAVRVLNYMADSLTATLTDAN.

It belongs to the HrcA family.

Its function is as follows. Negative regulator of class I heat shock genes (grpE-dnaK-dnaJ and groELS operons). Prevents heat-shock induction of these operons. This is Heat-inducible transcription repressor HrcA from Chlorobium phaeovibrioides (strain DSM 265 / 1930) (Prosthecochloris vibrioformis (strain DSM 265)).